The sequence spans 317 residues: Lactamase-like protein adaB (317 aa).

H97, H99, D101, and H102 together coordinate Zn(2+). The active-site Proton donor/acceptor is the D101.

It belongs to the metallo-beta-lactamase superfamily. Zn(2+) serves as cofactor.

The enzyme catalyses 3-(2,4-dioxopentyl)-2,3,6,8,9-pentahydroxy-1-oxo-1,2,3,4-tetrahydroanthracene-2-carboxyl-[ACP] = 2-acetyl-3,4a,8,10,11,12a-hexahydroxy-1,4,4a,5,12,12a-hexahydrotetracene-1,12-dione + holo-[ACP] + H(+). Its pathway is secondary metabolite biosynthesis. Its function is as follows. Lactamase-like protein; part of the gene cluster that mediates the biosynthesis of the linear tetracyclic TAN-1612 neuropeptide Y receptor antagonist. The decaketide backbone of TAN-1612 is synthesized by the non-reducing polyketide synthase adaA via condensation of one acetyl-CoA starter unit with 9 malonyl-CoA units. The FAD-dependent monooxygenase adaC then performs hydroxylation at C2 while the polaketide chain is still attached to the NRPKS adaA. The alpha-hydroxylation step at C2 appears to be crucial for the following C18-C1 Claisen cyclization and release of the C9-hydroxyl version of TAN-1612 from the NRPKS adaA, two steps performed by the lactamase-like protein adaB. Finally, the O-methyltransferase adaD performs the C9 O-methylation to complete the biosynthesis of TAN-1612. This is Lactamase-like protein adaB from Aspergillus niger (strain ATCC MYA-4892 / CBS 513.88 / FGSC A1513).